Reading from the N-terminus, the 340-residue chain is 4-hydroxythreonine-4-phosphate dehydrogenase (340 aa).

Residues histidine 141 and threonine 142 each contribute to the substrate site. Positions 177, 222, and 277 each coordinate a divalent metal cation. Residues lysine 285, asparagine 294, and arginine 303 each coordinate substrate.

The protein belongs to the PdxA family. As to quaternary structure, homodimer. Requires Zn(2+) as cofactor. Mg(2+) is required as a cofactor. It depends on Co(2+) as a cofactor.

The protein localises to the cytoplasm. It carries out the reaction 4-(phosphooxy)-L-threonine + NAD(+) = 3-amino-2-oxopropyl phosphate + CO2 + NADH. The protein operates within cofactor biosynthesis; pyridoxine 5'-phosphate biosynthesis; pyridoxine 5'-phosphate from D-erythrose 4-phosphate: step 4/5. In terms of biological role, catalyzes the NAD(P)-dependent oxidation of 4-(phosphooxy)-L-threonine (HTP) into 2-amino-3-oxo-4-(phosphooxy)butyric acid which spontaneously decarboxylates to form 3-amino-2-oxopropyl phosphate (AHAP). This chain is 4-hydroxythreonine-4-phosphate dehydrogenase, found in Maricaulis maris (strain MCS10) (Caulobacter maris).